The following is a 131-amino-acid chain: Small ribosomal subunit protein uS11 (131 aa).

This sequence belongs to the universal ribosomal protein uS11 family. Part of the 30S ribosomal subunit. Interacts with proteins S7 and S18. Binds to IF-3.

In terms of biological role, located on the platform of the 30S subunit, it bridges several disparate RNA helices of the 16S rRNA. Forms part of the Shine-Dalgarno cleft in the 70S ribosome. The protein is Small ribosomal subunit protein uS11 of Deinococcus radiodurans (strain ATCC 13939 / DSM 20539 / JCM 16871 / CCUG 27074 / LMG 4051 / NBRC 15346 / NCIMB 9279 / VKM B-1422 / R1).